Consider the following 245-residue polypeptide: 1-(5-phosphoribosyl)-5-[(5-phosphoribosylamino)methylideneamino] imidazole-4-carboxamide isomerase (245 aa).

D7 functions as the Proton acceptor in the catalytic mechanism. The Proton donor role is filled by D129.

The protein belongs to the HisA/HisF family.

Its subcellular location is the cytoplasm. It catalyses the reaction 1-(5-phospho-beta-D-ribosyl)-5-[(5-phospho-beta-D-ribosylamino)methylideneamino]imidazole-4-carboxamide = 5-[(5-phospho-1-deoxy-D-ribulos-1-ylimino)methylamino]-1-(5-phospho-beta-D-ribosyl)imidazole-4-carboxamide. It participates in amino-acid biosynthesis; L-histidine biosynthesis; L-histidine from 5-phospho-alpha-D-ribose 1-diphosphate: step 4/9. The polypeptide is 1-(5-phosphoribosyl)-5-[(5-phosphoribosylamino)methylideneamino] imidazole-4-carboxamide isomerase (Cronobacter sakazakii (strain ATCC BAA-894) (Enterobacter sakazakii)).